Reading from the N-terminus, the 323-residue chain is tRNA-modifying protein YgfZ (323 aa).

Residues Trp-29 and Trp-182 each contribute to the folate site.

Belongs to the tRNA-modifying YgfZ family.

It is found in the cytoplasm. Its function is as follows. Folate-binding protein involved in regulating the level of ATP-DnaA and in the modification of some tRNAs. It is probably a key factor in regulatory networks that act via tRNA modification, such as initiation of chromosomal replication. The protein is tRNA-modifying protein YgfZ of Vibrio cholerae serotype O1 (strain M66-2).